Here is a 526-residue protein sequence, read N- to C-terminus: Peptide chain release factor 3 (526 aa).

One can recognise a tr-type G domain in the interval 11–277 (SKRRTFAIIS…SLIKWAPSPL (267 aa)). GTP is bound by residues 20–27 (SHPDAGKT), 88–92 (DTPGH), and 142–145 (NKLD).

It belongs to the TRAFAC class translation factor GTPase superfamily. Classic translation factor GTPase family. PrfC subfamily.

It is found in the cytoplasm. Increases the formation of ribosomal termination complexes and stimulates activities of RF-1 and RF-2. It binds guanine nucleotides and has strong preference for UGA stop codons. It may interact directly with the ribosome. The stimulation of RF-1 and RF-2 is significantly reduced by GTP and GDP, but not by GMP. In Buchnera aphidicola subsp. Acyrthosiphon pisum (strain APS) (Acyrthosiphon pisum symbiotic bacterium), this protein is Peptide chain release factor 3 (prfC).